Consider the following 304-residue polypeptide: Oxygen-dependent coproporphyrinogen-III oxidase (304 aa).

Serine 94 contacts substrate. A divalent metal cation-binding residues include histidine 98 and histidine 108. Histidine 108 serves as the catalytic Proton donor. 110-112 (NVR) serves as a coordination point for substrate. Histidine 147 and histidine 177 together coordinate a divalent metal cation. The tract at residues 242–277 (YVEFNLVYDRGTLFGLQTGGRTESILMSMPPLVRWQ) is important for dimerization. Substrate is bound at residue 260–262 (GGR).

It belongs to the aerobic coproporphyrinogen-III oxidase family. Homodimer. The cofactor is a divalent metal cation.

It localises to the cytoplasm. The catalysed reaction is coproporphyrinogen III + O2 + 2 H(+) = protoporphyrinogen IX + 2 CO2 + 2 H2O. It participates in porphyrin-containing compound metabolism; protoporphyrin-IX biosynthesis; protoporphyrinogen-IX from coproporphyrinogen-III (O2 route): step 1/1. In terms of biological role, involved in the heme biosynthesis. Catalyzes the aerobic oxidative decarboxylation of propionate groups of rings A and B of coproporphyrinogen-III to yield the vinyl groups in protoporphyrinogen-IX. This is Oxygen-dependent coproporphyrinogen-III oxidase from Shewanella amazonensis (strain ATCC BAA-1098 / SB2B).